The following is a 306-amino-acid chain: MRVLFAGTPAVAVPSLDALVQAGFDVVAVLTRPDAPVGRKRVLTPSPVAARAAELGIEVIHAAKVDAEVTARIAAAAPDAAAIVAYGGLIPRAALDVPRHGWINLHFSLLPAWRGAAPVQRAVMAGDDITGAVTFLLEEGLDTGPVFGTLTESVRPDDTSGELLERLSHSGAALLAQTLSAIEAGRAVAVPQSGDVSLAPKLGIDDGRIDWHEPALAIGRRARGVTPEPGAWTTLDGQRVKLEPVALRTDAPALQPGQVLLDGKSVLVGTGSHPVELTRIQPSGKKMMAAADWARGQVALEGVVFE.

108 to 111 (SLLP) is a binding site for (6S)-5,6,7,8-tetrahydrofolate.

This sequence belongs to the Fmt family.

The enzyme catalyses L-methionyl-tRNA(fMet) + (6R)-10-formyltetrahydrofolate = N-formyl-L-methionyl-tRNA(fMet) + (6S)-5,6,7,8-tetrahydrofolate + H(+). Attaches a formyl group to the free amino group of methionyl-tRNA(fMet). The formyl group appears to play a dual role in the initiator identity of N-formylmethionyl-tRNA by promoting its recognition by IF2 and preventing the misappropriation of this tRNA by the elongation apparatus. In Arthrobacter sp. (strain FB24), this protein is Methionyl-tRNA formyltransferase.